Here is an 80-residue protein sequence, read N- to C-terminus: MPKKNEAPASFEKALSELEQIVTRLESGDLPLEEALNEFERGVQLARQGQAKLQQAEQRVQILLSDNEDASLTPFTPDNE.

Belongs to the XseB family. In terms of assembly, heterooligomer composed of large and small subunits.

The protein localises to the cytoplasm. It catalyses the reaction Exonucleolytic cleavage in either 5'- to 3'- or 3'- to 5'-direction to yield nucleoside 5'-phosphates.. Bidirectionally degrades single-stranded DNA into large acid-insoluble oligonucleotides, which are then degraded further into small acid-soluble oligonucleotides. The polypeptide is Exodeoxyribonuclease 7 small subunit (Escherichia coli O139:H28 (strain E24377A / ETEC)).